Consider the following 525-residue polypeptide: GMP synthase [glutamine-hydrolyzing] (525 aa).

One can recognise a Glutamine amidotransferase type-1 domain in the interval 9 to 207 (RILILDFGSQ…VLDICRCTPL (199 aa)). Residue C86 is the Nucleophile of the active site. Active-site residues include H181 and E183. Positions 208–400 (WTPAKIIEDA…LGLPYDMLYR (193 aa)) constitute a GMPS ATP-PPase domain. 235–241 (SGGVDSS) lines the ATP pocket.

Homodimer.

It catalyses the reaction XMP + L-glutamine + ATP + H2O = GMP + L-glutamate + AMP + diphosphate + 2 H(+). It participates in purine metabolism; GMP biosynthesis; GMP from XMP (L-Gln route): step 1/1. In terms of biological role, catalyzes the synthesis of GMP from XMP. The polypeptide is GMP synthase [glutamine-hydrolyzing] (Sodalis glossinidius (strain morsitans)).